Here is a 72-residue protein sequence, read N- to C-terminus: Conotoxin Vc6.16 (72 aa).

The N-terminal stretch at 1-19 is a signal peptide; the sequence is MQKLIILLLVAAVLMSTQA. The propeptide occupies 20 to 44; it reads LFQEKRPKEKIDLLSKRKTDAEKQQ. 3 disulfide bridges follow: cysteine 48–cysteine 62, cysteine 55–cysteine 66, and cysteine 61–cysteine 71.

This sequence belongs to the conotoxin O2 superfamily. As to expression, expressed by the venom duct.

Its subcellular location is the secreted. Inhibits voltage-gated ion channels. In Conus victoriae (Queen Victoria cone), this protein is Conotoxin Vc6.16.